Reading from the N-terminus, the 310-residue chain is Ribosomal protein uL3 glutamine methyltransferase (310 aa).

This sequence belongs to the protein N5-glutamine methyltransferase family. PrmB subfamily.

The enzyme catalyses L-glutaminyl-[ribosomal protein uL3] + S-adenosyl-L-methionine = N(5)-methyl-L-glutaminyl-[ribosomal protein uL3] + S-adenosyl-L-homocysteine + H(+). Specifically methylates large ribosomal subunit protein uL3 on 'Gln-150'. The protein is Ribosomal protein uL3 glutamine methyltransferase of Salmonella typhi.